The chain runs to 691 residues: Probable E3 ubiquitin-protein ligase RHG1A (691 aa).

5 disordered regions span residues 71-91 (SLGEASSSGTKDEASSHNEQR), 151-235 (GPGT…PRGM), 316-336 (SFVVSRNPNSTPVSIPPGSRT), 349-373 (VGGTSNSTAPVERNLHLDETRSRSI), and 395-501 (QSSR…MHNR). Basic and acidic residues predominate over residues 80–91 (TKDEASSHNEQR). Polar residues-rich tracts occupy residues 204–213 (GESSSWTPGS) and 317–328 (FVVSRNPNSTPV). Basic and acidic residues predominate over residues 361–370 (RNLHLDETRS). Polar residues predominate over residues 395–406 (QSSRNVTNGNLN). Residues 407 to 419 (SASSVSRTGSTTS) are compositionally biased toward low complexity. Over residues 429–440 (NLAWTSYQNSPH) the composition is skewed to polar residues. Low complexity predominate over residues 454–465 (RSLLSSLAADAT). Residues 637 to 678 (CCVCQEEYTEGEDMGTLECGHEFHSQCIKEWLKQKNLCPICK) form an RING-type; atypical zinc finger.

As to expression, expressed in stems, flowers, green siliques, cauline leaves, seeds and roots.

The catalysed reaction is S-ubiquitinyl-[E2 ubiquitin-conjugating enzyme]-L-cysteine + [acceptor protein]-L-lysine = [E2 ubiquitin-conjugating enzyme]-L-cysteine + N(6)-ubiquitinyl-[acceptor protein]-L-lysine.. It participates in protein modification; protein ubiquitination. Its function is as follows. Probable E3 ubiquitin-protein ligase that may possess E3 ubiquitin ligase activity in vitro. The chain is Probable E3 ubiquitin-protein ligase RHG1A from Arabidopsis thaliana (Mouse-ear cress).